A 765-amino-acid chain; its full sequence is Cyanobacterial phytochrome A (765 aa).

The chromophore binding domain stretch occupies residues 20-510 (IHLSGQIQPH…RKAIVNIVLR (491 aa)). The 169-residue stretch at 152–320 (NLRDFCQIIV…VIFAEISARE (169 aa)) folds into the GAF domain. Cys259 is an a tetrapyrrole binding site. The Histidine kinase domain maps to 535 to 748 (VASHDLQEPL…TFYFTIPVGG (214 aa)). His538 is modified (phosphohistidine; by autocatalysis).

The protein in the N-terminal section; belongs to the phytochrome family. Post-translationally, contains one covalently linked tetrapyrrole chromophore.

The catalysed reaction is ATP + protein L-histidine = ADP + protein N-phospho-L-histidine.. Photoreceptor which exists in two forms that are reversibly interconvertible by light: the R form that absorbs maximally in the red region of the spectrum and the FR form that absorbs maximally in the far-red region. This chain is Cyanobacterial phytochrome A (aphA), found in Nostoc sp. (strain PCC 7120 / SAG 25.82 / UTEX 2576).